The primary structure comprises 205 residues: Beta-crystallin B2 (205 aa).

Position 2 is an N-acetylalanine (alanine 2). The segment at 2–16 (ASDHQTQAGKPQPLN) is N-terminal arm. Beta/gamma crystallin 'Greek key' domains lie at 17 to 56 (PKII…LVQA) and 57 to 101 (GPWV…RPIK). The interval 102–106 (VDSQE) is connecting peptide. 2 consecutive Beta/gamma crystallin 'Greek key' domains span residues 107–148 (HKII…RVQS) and 149–191 (GTWV…RRIR). The interval 193–205 (MQWHQRGAFHPSS) is C-terminal arm.

This sequence belongs to the beta/gamma-crystallin family. As to quaternary structure, homo/heterodimer, or complexes of higher-order. The structure of beta-crystallin oligomers seems to be stabilized through interactions between the N-terminal arms.

Crystallins are the dominant structural components of the vertebrate eye lens. The sequence is that of Beta-crystallin B2 (CRYBB2) from Mesocricetus auratus (Golden hamster).